The primary structure comprises 674 residues: Polyunsaturated fatty acid 5-lipoxygenase (674 aa).

Positions Pro-2–Lys-118 constitute a PLAT domain. Ca(2+) is bound by residues Gly-17, Thr-18, Asp-19, Asn-44, Asp-45, Glu-47, Asp-79, and Asp-80. The Lipoxygenase domain occupies Leu-119–Ile-674. Ser-272 bears the Phosphoserine; by MAPKAPK2 mark. 2 residues coordinate Fe cation: His-368 and His-373. Position 524 is a phosphoserine; by PKA (Ser-524). Residues His-551, Asn-555, and Ile-674 each coordinate Fe cation.

Belongs to the lipoxygenase family. Homodimer. Interacts with ALOX5AP and LTC4S. Interacts with COTL1, the interaction is required for stability and efficient catalytic activity. Interacts with PIK3R1; this interaction bridges ALOX5 with CD40 after CD40 ligation in B cells and leads to the production of reactive oxygen species (ROS). Interacts (via PLAT domain) with DICER1 (via Dicer dsRNA-binding fold domain); this interaction enhances arachidonate 5-lipoxygenase activity and modifies the miRNA precursor processing activity of DICER1. Fe cation is required as a cofactor. In terms of processing, serine phosphorylation by MAPKAPK2 is stimulated by arachidonic acid. Phosphorylation on Ser-524 by PKA has an inhibitory effect. Phosphorylation on Ser-272 prevents export from the nucleus. Phosphorylation at Ser-524 is stimulated by 8-bromo-3',5'-cyclic AMP or prostaglandin E2.

Its subcellular location is the cytoplasm. The protein localises to the nucleus matrix. The protein resides in the nucleus membrane. It localises to the perinuclear region. It is found in the cytosol. Its subcellular location is the nucleus envelope. The protein localises to the nucleus intermembrane space. It catalyses the reaction (5Z,8Z,11Z,14Z)-eicosatetraenoate + O2 = leukotriene A4 + H2O. It carries out the reaction 18-HEPE + O2 = (5S)-hydroperoxy-18-hydroxy-(7E,9E,11Z,14Z,16E)-eicosapentaenoate. The catalysed reaction is (18R)-hydroxy-(5Z,8Z,11Z,14Z,16E)-eicosapentaenoate + O2 = (5S)-hydroperoxy-(18R)-hydroxy-(6E,8Z,11Z,14Z,16E)-eicosapentaenoate. The enzyme catalyses (18S)-hydroxy-(5Z,8Z,11Z,14Z,16E)-eicosapentaenoate + O2 = (5S)-hydroperoxy-(18S)-hydroxy-(6E,8Z,11Z,14Z,16E)-eicosapentaenoate. It catalyses the reaction (5S)-hydroperoxy-(18S)-hydroxy-(6E,8Z,11Z,14Z,16E)-eicosapentaenoate = (5S,6S)-epoxy-(18S)-hydroxy-(7E,9E,11Z,14Z,16E)-eicosapentaenoate + H2O. It carries out the reaction (5S)-hydroperoxy-(18R)-hydroxy-(6E,8Z,11Z,14Z,16E)-eicosapentaenoate = (5S,6S)-epoxy-(18R)-hydroxy-(7E,9E,11Z,14Z,16E)-eicosapentaenoate + H2O. The catalysed reaction is (5S)-hydroperoxy-18-hydroxy-(7E,9E,11Z,14Z,16E)-eicosapentaenoate = (5S,6S)-epoxy-18-hydroxy-(7E,9E,11Z,14Z,16E)-eicosapentaenoate + H2O. The enzyme catalyses (5Z,8Z,11Z,14Z)-eicosatetraenoate + O2 = (5S)-hydroperoxy-(6E,8Z,11Z,14Z)-eicosatetraenoate. It catalyses the reaction (15S)-hydroxy-(5Z,8Z,11Z,13E)-eicosatetraenoate + O2 = (5S)-hydroperoxy-(15S)-hydroxy-(6E,8Z,11Z,13E)-eicosatetraenoate. It carries out the reaction (5S)-hydroperoxy-(6E,8Z,11Z,14Z)-eicosatetraenoate = leukotriene A4 + H2O. The catalysed reaction is (5Z,8Z,11Z,14Z)-eicosatetraenoate + O2 = (8S)-hydroperoxy-(5Z,9E,11Z,14Z)-eicosatetraenoate. The enzyme catalyses (5Z,8Z,11Z,14Z)-eicosatetraenoate + O2 = (12S)-hydroperoxy-(5Z,8Z,10E,14Z)-eicosatetraenoate. It catalyses the reaction (5Z,8Z)-eicosadienoate + O2 = (5S)-hydroperoxy-(6E,8Z)-eicosadienoate. It carries out the reaction (12S)-hydroxy-(5Z,8Z,10E,14Z)-eicosatetraenoate + O2 = (5S)-hydroperoxy-(12S)-hydroxy-(6E,8Z,10E,14Z)-eicosatetraenoate. The catalysed reaction is (5Z,8Z,11Z,14Z,17Z)-eicosapentaenoate + O2 = 5-hydroperoxy-(6E,8Z,11Z,14Z,17Z)-eicosapentaenoate. The enzyme catalyses (4Z,7Z,10Z,13Z,16Z,19Z)-docosahexaenoate + O2 = (14S)-hydroperoxy-(4Z,7Z,10Z,12E,16Z,19Z)-docosahexaenoate. It catalyses the reaction (4Z,7Z,10Z,13Z,16Z,19Z)-docosahexaenoate + O2 = (7S)-hydroperoxy-(4Z,8E,10Z,13Z,16Z,19Z)-docosahexaenoate. It carries out the reaction (4Z,7Z,10Z,13Z,16Z,19Z)-docosahexaenoate + O2 = (17S)-hydroperoxy-(4Z,7Z,10Z,13Z,15E,19Z)-docosahexaenoate. It functions in the pathway lipid metabolism; leukotriene A4 biosynthesis. Undergoes a sequential loss of the oxygenase and pseudoperoxidase activities which is dependent on the structural characteristics of the substrate for the reaction, on oxygen concentration and on exposure to phospholipids and calcium. 15-HETE and other 15-mono-hydroxyeicosanoids exhibit the highest inhibitory potencies in their capability of suppressing 5-lipoxygenation of arachidonic acid, whereas the other HETEs, (5S,15S)-dihydroxy-(6E,8Z,11Z,13E)-eicosatetraenoic acid (5,15-diHETE) as well as octadecanoids, are modest or poor inhibitors. The formation of (5S)-hydroperoxy-(15S)-hydroxy-(6E,8Z,11Z,13E)-eicosatetraenoate is strongly stimulated by either hydroperoxypolyenoic fatty acids or arachidonic acid. Arachidonate 5-lipoxygenase and leukotriene A4 synthase activities are allosterically increased by ATP. Catalyzes the oxygenation of arachidonate ((5Z,8Z,11Z,14Z)-eicosatetraenoate) to 5-hydroperoxyeicosatetraenoate (5-HPETE) followed by the dehydration to 5,6- epoxyeicosatetraenoate (Leukotriene A4/LTA4), the first two steps in the biosynthesis of leukotrienes, which are potent mediators of inflammation. Also catalyzes the oxygenation of arachidonate into 8-hydroperoxyicosatetraenoate (8-HPETE) and 12-hydroperoxyicosatetraenoate (12-HPETE). Displays lipoxin synthase activity being able to convert (15S)-HETE into a conjugate tetraene. Although arachidonate is the preferred substrate, this enzyme can also metabolize oxidized fatty acids derived from arachidonate such as (15S)-HETE, eicosapentaenoate (EPA) such as (18R)- and (18S)-HEPE or docosahexaenoate (DHA) which lead to the formation of specialized pro-resolving mediators (SPM) lipoxin and resolvins E and D respectively, therefore it participates in anti-inflammatory responses. Oxidation of DHA directly inhibits endothelial cell proliferation and sprouting angiogenesis via peroxisome proliferator-activated receptor gamma (PPARgamma). It does not catalyze the oxygenation of linoleic acid and does not convert (5S)-HETE to lipoxin isomers. In addition to inflammatory processes, it participates in dendritic cell migration, wound healing through an antioxidant mechanism based on heme oxygenase-1 (HO-1) regulation expression, monocyte adhesion to the endothelium via ITGAM expression on monocytes. Moreover, it helps establish an adaptive humoral immunity by regulating primary resting B cells and follicular helper T cells and participates in the CD40-induced production of reactive oxygen species (ROS) after CD40 ligation in B cells through interaction with PIK3R1 that bridges ALOX5 with CD40. May also play a role in glucose homeostasis, regulation of insulin secretion and palmitic acid-induced insulin resistance via AMPK. Can regulate bone mineralization and fat cell differentiation increases in induced pluripotent stem cells. This chain is Polyunsaturated fatty acid 5-lipoxygenase, found in Homo sapiens (Human).